The chain runs to 750 residues: Sulfhydryl oxidase 1 (750 aa).

An N-terminal signal peptide occupies residues 1–32 (MGRCNRGSGPPSSLLLLLLLLLWLLAVPGASA). The region spanning 39-159 (YSPSDPLTLL…RERLIDALES (121 aa)) is the Thioredoxin domain. Catalysis depends on nucleophile residues cysteine 73 and cysteine 76. 2 disulfides stabilise this stretch: cysteine 73–cysteine 76 and cysteine 104–cysteine 113. 2 N-linked (GlcNAc...) asparagine glycosylation sites follow: asparagine 133 and asparagine 246. Cysteine 396 and cysteine 408 are oxidised to a cystine. The ERV/ALR sulfhydryl oxidase domain occupies 399-506 (SEPHFRGFPC…EDPQFPKVQW (108 aa)). 3 residues coordinate FAD: arginine 404, tryptophan 411, and histidine 415. At serine 429 the chain carries Phosphoserine. Cysteines 452 and 455 form a disulfide. FAD contacts are provided by residues aspartate 454, histidine 458, 481–488 (WSSHNRVN), lysine 503, and tryptophan 506. Cysteine 512 and cysteine 515 form a disulfide bridge. Residue asparagine 578 is glycosylated (N-linked (GlcNAc...) asparagine). Residues 578–645 (NSTVDLGKPE…REQPRGQWHL (68 aa)) are disordered. Residues 624 to 639 (PPEHMAELQTNEREQP) are compositionally biased toward basic and acidic residues. Residues 713 to 733 (ISLCVGLYSLSFMGLLAMYAY) form a helical membrane-spanning segment.

It belongs to the quiescin-sulfhydryl oxidase (QSOX) family. In terms of assembly, monomer. FAD serves as cofactor. In terms of processing, N-glycosylated. O-glycosylated on Thr and Ser residues.

It is found in the golgi apparatus membrane. The protein resides in the secreted. The catalysed reaction is 2 R'C(R)SH + O2 = R'C(R)S-S(R)CR' + H2O2. In terms of biological role, catalyzes the oxidation of sulfhydryl groups in peptide and protein thiols to disulfides with the reduction of oxygen to hydrogen peroxide. Plays a role in disulfide bond formation in a variety of extracellular proteins. In fibroblasts, required for normal incorporation of laminin into the extracellular matrix, and thereby for normal cell-cell adhesion and cell migration. The polypeptide is Sulfhydryl oxidase 1 (QSOX1) (Pongo abelii (Sumatran orangutan)).